A 234-amino-acid chain; its full sequence is Endonuclease V (234 aa).

Residues aspartate 46 and aspartate 116 each contribute to the Mg(2+) site.

It belongs to the endonuclease V family. It depends on Mg(2+) as a cofactor.

The protein localises to the cytoplasm. The catalysed reaction is Endonucleolytic cleavage at apurinic or apyrimidinic sites to products with a 5'-phosphate.. Functionally, DNA repair enzyme involved in the repair of deaminated bases. Selectively cleaves double-stranded DNA at the second phosphodiester bond 3' to a deoxyinosine leaving behind the intact lesion on the nicked DNA. The chain is Endonuclease V from Clostridium acetobutylicum (strain ATCC 824 / DSM 792 / JCM 1419 / IAM 19013 / LMG 5710 / NBRC 13948 / NRRL B-527 / VKM B-1787 / 2291 / W).